A 37-amino-acid chain; its full sequence is MKVRASVKPICSKCKVVRRKGIVRIICENPKHKQKQG.

This sequence belongs to the bacterial ribosomal protein bL36 family.

The chain is Large ribosomal subunit protein bL36 from Syntrophotalea carbinolica (strain DSM 2380 / NBRC 103641 / GraBd1) (Pelobacter carbinolicus).